A 301-amino-acid polypeptide reads, in one-letter code: MNVTLRPPLAAAPRRPDGAGSVQVQMDPNLVIGTARVFSVYGKGGIGKSTTSSNLSVALSKLGKRVLQIGCDPKHDSTFTLTKRLVPTVIDILEQVNFHSEELRPDDFVYQGYNGVMCVEAGGPPAGTGCGGYVVGQTVKLLKEHHLLDDTDVVIFDVLGDVVCGGFASPLQHADRALIVAANDFDSIFAMNRIVAAIQAKSRNYPVRLGGVIANRSAATDQIDKFNERIGMKTLAHFPDLDVIRKSRLKKCTLFEMEPSPDVERAQNEYLRLAASLLAGVEPIHAVPLKDRDIFDLLGFD.

A compositionally biased stretch (low complexity) spans 1–13 (MNVTLRPPLAAAP). Residues 1 to 22 (MNVTLRPPLAAAPRRPDGAGSV) are disordered. ATP contacts are provided by residues 45 to 50 (GIGKST) and Lys74. Residue Ser49 coordinates Mg(2+). Residues Cys130 and Cys164 each contribute to the [4Fe-4S] cluster site. Residues 215-216 (NR) and 239-241 (PDL) each bind ATP.

It belongs to the NifH/BchL/ChlL family. Homodimer. Protochlorophyllide reductase is composed of three subunits; BchL, BchN and BchB. [4Fe-4S] cluster is required as a cofactor.

The enzyme catalyses chlorophyllide a + oxidized 2[4Fe-4S]-[ferredoxin] + 2 ADP + 2 phosphate = protochlorophyllide a + reduced 2[4Fe-4S]-[ferredoxin] + 2 ATP + 2 H2O. Its pathway is porphyrin-containing compound metabolism; bacteriochlorophyll biosynthesis (light-independent). Functionally, component of the dark-operative protochlorophyllide reductase (DPOR) that uses Mg-ATP and reduced ferredoxin to reduce ring D of protochlorophyllide (Pchlide) to form chlorophyllide a (Chlide). This reaction is light-independent. The L component serves as a unique electron donor to the NB-component of the complex, and binds Mg-ATP. This chain is Light-independent protochlorophyllide reductase iron-sulfur ATP-binding protein, found in Bradyrhizobium sp. (strain ORS 278).